The following is a 452-amino-acid chain: Pup--protein ligase (452 aa).

Glutamate 9 contacts Mg(2+). Arginine 53 is an ATP binding site. Mg(2+) is bound at residue tyrosine 55. Aspartate 57 acts as the Proton acceptor in catalysis. Glutamate 63 contacts Mg(2+). 2 residues coordinate ATP: threonine 66 and tryptophan 419.

It belongs to the Pup ligase/Pup deamidase family. Pup-conjugating enzyme subfamily.

The catalysed reaction is ATP + [prokaryotic ubiquitin-like protein]-L-glutamate + [protein]-L-lysine = ADP + phosphate + N(6)-([prokaryotic ubiquitin-like protein]-gamma-L-glutamyl)-[protein]-L-lysine.. It functions in the pathway protein degradation; proteasomal Pup-dependent pathway. The protein operates within protein modification; protein pupylation. Its function is as follows. Catalyzes the covalent attachment of the prokaryotic ubiquitin-like protein modifier Pup to the proteasomal substrate proteins, thereby targeting them for proteasomal degradation. This tagging system is termed pupylation. The ligation reaction involves the side-chain carboxylate of the C-terminal glutamate of Pup and the side-chain amino group of a substrate lysine. In Mycobacterium sp. (strain JLS), this protein is Pup--protein ligase.